The sequence spans 363 residues: Dual-specificity RNA methyltransferase RlmN (363 aa).

Glu-102 (proton acceptor) is an active-site residue. Residues 108 to 344 (EKKRSTLCVS…TTTIRKNRGE (237 aa)) form the Radical SAM core domain. An intrachain disulfide couples Cys-115 to Cys-350. [4Fe-4S] cluster is bound by residues Cys-122, Cys-126, and Cys-129. Residues 174–175 (GE), Ser-206, 228–230 (SLH), and Asn-307 each bind S-adenosyl-L-methionine. Cys-350 (S-methylcysteine intermediate) is an active-site residue.

It belongs to the radical SAM superfamily. RlmN family. [4Fe-4S] cluster is required as a cofactor.

The protein resides in the cytoplasm. It catalyses the reaction adenosine(2503) in 23S rRNA + 2 reduced [2Fe-2S]-[ferredoxin] + 2 S-adenosyl-L-methionine = 2-methyladenosine(2503) in 23S rRNA + 5'-deoxyadenosine + L-methionine + 2 oxidized [2Fe-2S]-[ferredoxin] + S-adenosyl-L-homocysteine. The catalysed reaction is adenosine(37) in tRNA + 2 reduced [2Fe-2S]-[ferredoxin] + 2 S-adenosyl-L-methionine = 2-methyladenosine(37) in tRNA + 5'-deoxyadenosine + L-methionine + 2 oxidized [2Fe-2S]-[ferredoxin] + S-adenosyl-L-homocysteine. In terms of biological role, specifically methylates position 2 of adenine 2503 in 23S rRNA and position 2 of adenine 37 in tRNAs. m2A2503 modification seems to play a crucial role in the proofreading step occurring at the peptidyl transferase center and thus would serve to optimize ribosomal fidelity. In Buchnera aphidicola subsp. Acyrthosiphon pisum (strain APS) (Acyrthosiphon pisum symbiotic bacterium), this protein is Dual-specificity RNA methyltransferase RlmN.